The following is a 414-amino-acid chain: Bifunctional protein GlmU (414 aa).

A pyrophosphorylase region spans residues 1-208 (MDAVILCAGS…SSKLYGIELN (208 aa)). UTP-binding positions include 6-9 (LCAG), glutamine 74, and glycine 79. N-acetyl-alpha-D-glucosamine 1-phosphate contacts are provided by threonine 80, glycine 130, asparagine 142, and asparagine 162. Residues 209 to 228 (GYWNDIGRPWDVLSANNYFL) are linker. The N-acetyltransferase stretch occupies residues 229–414 (KNIMPKISGN…KDELIIKKRN (186 aa)). Histidine 312 functions as the Proton acceptor in the catalytic mechanism. Alanine 388 and lysine 405 together coordinate acetyl-CoA.

The protein in the N-terminal section; belongs to the N-acetylglucosamine-1-phosphate uridyltransferase family. In the C-terminal section; belongs to the transferase hexapeptide repeat family.

The catalysed reaction is N-acetyl-alpha-D-glucosamine 1-phosphate + UTP + H(+) = UDP-N-acetyl-alpha-D-glucosamine + diphosphate. It carries out the reaction alpha-D-glucosamine 1-phosphate + acetyl-CoA = N-acetyl-alpha-D-glucosamine 1-phosphate + CoA + H(+). It functions in the pathway nucleotide-sugar biosynthesis; UDP-N-acetyl-alpha-D-glucosamine biosynthesis; N-acetyl-alpha-D-glucosamine 1-phosphate from alpha-D-glucosamine 6-phosphate (route II): step 2/2. It participates in nucleotide-sugar biosynthesis; UDP-N-acetyl-alpha-D-glucosamine biosynthesis; UDP-N-acetyl-alpha-D-glucosamine from N-acetyl-alpha-D-glucosamine 1-phosphate: step 1/1. Catalyzes the last two sequential reactions in the de novo biosynthetic pathway for UDP-N-acetyl-glucosamine (UDP-GlcNAc). Responsible for the acetylation of GlcN-1-P to GlcNAc-1-P, and for the uridyl transfer from UTP to GlcNAc-1-P, to produce UDP-GlcNAc and pyrophosphate. The sequence is that of Bifunctional protein GlmU from Methanococcus vannielii (strain ATCC 35089 / DSM 1224 / JCM 13029 / OCM 148 / SB).